The following is a 431-amino-acid chain: UDP-N-acetylmuramate--L-alanine ligase (431 aa).

108 to 114 (GAHGKST) is a binding site for ATP.

The protein belongs to the MurCDEF family.

The protein localises to the cytoplasm. It catalyses the reaction UDP-N-acetyl-alpha-D-muramate + L-alanine + ATP = UDP-N-acetyl-alpha-D-muramoyl-L-alanine + ADP + phosphate + H(+). Its pathway is cell wall biogenesis; peptidoglycan biosynthesis. Its function is as follows. Cell wall formation. The protein is UDP-N-acetylmuramate--L-alanine ligase of Campylobacter jejuni subsp. doylei (strain ATCC BAA-1458 / RM4099 / 269.97).